The following is a 327-amino-acid chain: Acetaldehyde dehydrogenase 5 (327 aa).

15 to 18 (SGNI) is an NAD(+) binding site. The Acyl-thioester intermediate role is filled by Cys-133. NAD(+) contacts are provided by residues 164 to 172 (SAGPGTRAN) and Asn-297.

It belongs to the acetaldehyde dehydrogenase family.

The catalysed reaction is acetaldehyde + NAD(+) + CoA = acetyl-CoA + NADH + H(+). The protein is Acetaldehyde dehydrogenase 5 of Rhodococcus jostii (strain RHA1).